A 409-amino-acid polypeptide reads, in one-letter code: Triose phosphate/phosphate translocator, chloroplastic (409 aa).

Residues 1 to 85 constitute a chloroplast transit peptide; that stretch reads MSALGTLSGG…ARRHTLQPPA (85 aa). The Chloroplast intermembrane portion of the chain corresponds to 86 to 104; the sequence is AAAESAGEAKSVGFLEKYP. The helical transmembrane segment at 105–125 threads the bilayer; the sequence is ALVTGFFFFMWYFLNVIFNIL. Residues 126 to 137 are Lumenal-facing; it reads NKKIYNYFPYPY. The chain crosses the membrane as a helical span at residues 138-158; the sequence is FVSLIHLVVGVVYCLISWSVG. The Chloroplast intermembrane segment spans residues 159–215; sequence LPKRAPINGTLLKLLFPVALCHGIGHITSNVSFAAVAVSFAHTIKALEPFFSAAATQ. The chain crosses the membrane as a helical span at residues 216–236; the sequence is FILGQQVPFSLWLSLAPVVIG. The Lumenal portion of the chain corresponds to 237-280; sequence VSMASLTELSFNWTGFINAMISNISFTYRSIYSKKAMTDMDSTN. A helical transmembrane segment spans residues 281-300; it reads VYAYISIIALIVCIPPALIF. Over 301–378 the chain is Chloroplast intermembrane; it reads EGPKLMQHGF…IVFGNKISTQ (78 aa). A helical transmembrane segment spans residues 379–399; it reads TGIGTSIAIAGVAMYSYIKAK. At 400–409 the chain is on the lumenal side; it reads IEEEKRKKSA.

This sequence belongs to the TPT transporter family. TPT (TC 2.A.7.9) subfamily. Homodimer.

It is found in the plastid. Its subcellular location is the chloroplast membrane. Mediates the export of fixed carbons from the chloroplasts into the cytosol in the form of triose phosphates. In addition, it can also bind and transport phosphoenolpyruvate, thereby increasing the photosynthetic efficiency of C4-plants. The protein is Triose phosphate/phosphate translocator, chloroplastic (TPT) of Zea mays (Maize).